The following is a 316-amino-acid chain: MSLGIMEEEDLAEYFRLQYGERLLQLLQKFPSIEDQSDSPSVRLLEKKKEAKIMHHAMEQKKETFQRRMETLNLRWEELGIKEAQLKAHIQKFEQFIQENDQKRIRALKKANKERELKRQRMRELAKAKQEMAVLRLEHQRLSAKLQEYSIFNKYLEKVVENSEFEEIHEVIARYKTLVSMHHDLMQSAQEGQEKIERAKARLARYKEEKDDEILQHNNELARLQMRFDRARSDVIIWESRWAHIQNTAAKKTLLLGTIKMATLNLFQIVSKQLKEATFVSLEDTHKQLDMIQQFIQDLSDIWAEVKKKELQQIRV.

Coiled coils occupy residues Arg-43–Ile-151 and His-182–Ile-236.

This sequence belongs to the CFAP73 family. In terms of assembly, interacts with ODF1 and ODF2. Interacts with CCDC38. Interacts with CCDC146. Interacts with CFAP53.

It is found in the cytoplasm. It localises to the perinuclear region. Its subcellular location is the cytoskeleton. The protein resides in the cell projection. The protein localises to the cilium. It is found in the flagellum. It localises to the microtubule organizing center. Its subcellular location is the centrosome. Its function is as follows. Essential for male fertility. Required for sperm development. In Bos taurus (Bovine), this protein is Coiled-coil domain-containing protein 42.